The chain runs to 384 residues: Sphingosine kinase 1 (384 aa).

Positions 12–159 constitute a DAGKc domain; that stretch reads PRPCRVLVLL…MNLLSLHTAS (148 aa). Residues 22 to 24 and 54 to 58 contribute to the ATP site; these read NPR and TERRN. 79–82 is a binding site for substrate; sequence SGDG. The Proton donor/acceptor role is filled by Asp-81. ATP contacts are provided by residues Glu-86 and 111-113; that span reads GSG. 2 consecutive short sequence motifs (nuclear export signal) follow at residues 147 to 155 and 161 to 169; these read LSPMNLLSL and LRLFSVLSL. Asp-178 contributes to the substrate binding site. Residues Arg-185 and Arg-191 each coordinate ATP. Thr-193 is subject to Phosphothreonine. Phosphoserine is present on Ser-225. 341-343 provides a ligand contact to ATP; the sequence is DGE.

As to quaternary structure, interacts with ACY1. Binds to calmodulin. Interacts with SPHKAP. Interacts with CIB1, the interaction occurs in a calcium-dependent manner. Interacts with TRAF2. Interacts with EEF1A1; the interaction enhances SPHK1 kinase activity. Mg(2+) serves as cofactor. Widely expressed with highest levels in adult liver, kidney, heart and skeletal muscle. Expressed in brain cortex (at protein level).

It localises to the cytoplasm. The protein localises to the nucleus. The protein resides in the cell membrane. It is found in the endosome membrane. Its subcellular location is the membrane. It localises to the clathrin-coated pit. The protein localises to the synapse. The catalysed reaction is a sphingoid base + ATP = a sphingoid 1-phosphate + ADP + H(+). It carries out the reaction L-seryl-[protein] + acetyl-CoA = O-acetyl-L-seryl-[protein] + CoA. It catalyses the reaction sphinganine + ATP = sphinganine 1-phosphate + ADP + H(+). The enzyme catalyses sphing-4-enine + ATP = sphing-4-enine 1-phosphate + ADP + H(+). The catalysed reaction is 1-O-hexadecyl-2-amino-sn-glycerol + ATP = 1-O-hexadecyl-2-desoxy-2-amino-sn-glycero-3-phosphate + ADP + H(+). Its activity is regulated as follows. Acetyltransferase activity increases in presence of the kinase substrate, sphingosine. In Purkinje cells, kinase activity on sphingosine increases in presence of VEGFA. In neurons, kinase activity increases during the first 24h in presence of Amyloid-beta protein 42 to decrease after 96h. Its function is as follows. Catalyzes the phosphorylation of sphingosine to form sphingosine 1-phosphate (SPP), a lipid mediator with both intra- and extracellular functions. Also acts on D-erythro-sphingosine and to a lesser extent sphinganine, but not other lipids, such as D,L-threo-dihydrosphingosine, N,N-dimethylsphingosine, diacylglycerol, ceramide, or phosphatidylinositol. In contrast to proapoptotic SPHK2, has a negative effect on intracellular ceramide levels, enhances cell growth and inhibits apoptosis. Involved in the regulation of inflammatory response and neuroinflammation. Via the product sphingosine 1-phosphate, stimulates TRAF2 E3 ubiquitin ligase activity, and promotes activation of NF-kappa-B in response to TNF signaling leading to IL17 secretion. In response to TNF and in parallel to NF-kappa-B activation, negatively regulates RANTES induction through p38 MAPK signaling pathway. Involved in endocytic membrane trafficking induced by sphingosine, recruited to dilate endosomes, also plays a role on later stages of endosomal maturation and membrane fusion independently of its kinase activity. In Purkinje cells, seems to be also involved in the regulation of autophagosome-lysosome fusion upon VEGFA. Has serine acetyltransferase activity on PTGS2/COX2 in an acetyl-CoA dependent manner. The acetyltransferase activity increases in presence of the kinase substrate, sphingosine. During neuroinflammation, through PTGS2 acetylation, promotes neuronal secretion of specialized preresolving mediators (SPMs), especially 15-R-lipoxin A4, which results in an increase of phagocytic microglia. The protein is Sphingosine kinase 1 of Homo sapiens (Human).